A 445-amino-acid polypeptide reads, in one-letter code: Chromosome partition protein MukF (445 aa).

Residues 213-241 (LSETSNTLKELQDTLQAAGDELQTQILDI) form a leucine-zipper region.

This sequence belongs to the MukF family. In terms of assembly, interacts, and probably forms a ternary complex, with MukE and MukB via its C-terminal region. The complex formation is stimulated by calcium or magnesium. It is required for an interaction between MukE and MukB.

The protein resides in the cytoplasm. It localises to the nucleoid. Functionally, involved in chromosome condensation, segregation and cell cycle progression. May participate in facilitating chromosome segregation by condensation DNA from both sides of a centrally located replisome during cell division. Not required for mini-F plasmid partitioning. Probably acts via its interaction with MukB and MukE. Overexpression results in anucleate cells. It has a calcium binding activity. The protein is Chromosome partition protein MukF of Vibrio vulnificus (strain YJ016).